We begin with the raw amino-acid sequence, 169 residues long: Cell division inhibitor SulA (169 aa).

Positions 1 to 13 are enriched in polar residues; the sequence is MFTSAHANRSAQA. A disordered region spans residues 1 to 26; the sequence is MFTSAHANRSAQASAPAGHYAHRSGE. The interval 106 to 112 is ftsZ binding; it reads ALRTGNY. A lon protease binding region spans residues 162–169; the sequence is KIHSNLYH.

It belongs to the SulA family. In terms of assembly, interacts with FtsZ. Is rapidly cleaved and degraded by the Lon protease once DNA damage is repaired.

Its function is as follows. Component of the SOS system and an inhibitor of cell division. Accumulation of SulA causes rapid cessation of cell division and the appearance of long, non-septate filaments. In the presence of GTP, binds a polymerization-competent form of FtsZ in a 1:1 ratio, thus inhibiting FtsZ polymerization and therefore preventing it from participating in the assembly of the Z ring. This mechanism prevents the premature segregation of damaged DNA to daughter cells during cell division. The chain is Cell division inhibitor SulA from Klebsiella pneumoniae subsp. pneumoniae (strain ATCC 700721 / MGH 78578).